The primary structure comprises 191 residues: Protein Ves (191 aa).

It belongs to the Ves family.

This Escherichia coli (strain K12 / MC4100 / BW2952) protein is Protein Ves.